The following is a 414-amino-acid chain: Dual-specificity RNA methyltransferase RlmN (414 aa).

Over residues 1-20 the composition is skewed to low complexity; sequence MMSTPETATEATAPEAAPAP. Positions 1-24 are disordered; it reads MMSTPETATEATAPEAAPAPSLGA. The active-site Proton acceptor is the Glu-129. The region spanning 135 to 385 is the Radical SAM core domain; sequence ESDRGTLCVS…VRTPRGRDIL (251 aa). Cys-142 and Cys-388 are disulfide-bonded. Positions 149, 153, and 156 each coordinate [4Fe-4S] cluster. S-adenosyl-L-methionine-binding positions include 214 to 215, Ser-246, 268 to 270, and Asn-345; these read GE and SLH. The active-site S-methylcysteine intermediate is Cys-388.

This sequence belongs to the radical SAM superfamily. RlmN family. [4Fe-4S] cluster is required as a cofactor.

It localises to the cytoplasm. The enzyme catalyses adenosine(2503) in 23S rRNA + 2 reduced [2Fe-2S]-[ferredoxin] + 2 S-adenosyl-L-methionine = 2-methyladenosine(2503) in 23S rRNA + 5'-deoxyadenosine + L-methionine + 2 oxidized [2Fe-2S]-[ferredoxin] + S-adenosyl-L-homocysteine. It catalyses the reaction adenosine(37) in tRNA + 2 reduced [2Fe-2S]-[ferredoxin] + 2 S-adenosyl-L-methionine = 2-methyladenosine(37) in tRNA + 5'-deoxyadenosine + L-methionine + 2 oxidized [2Fe-2S]-[ferredoxin] + S-adenosyl-L-homocysteine. Specifically methylates position 2 of adenine 2503 in 23S rRNA and position 2 of adenine 37 in tRNAs. m2A2503 modification seems to play a crucial role in the proofreading step occurring at the peptidyl transferase center and thus would serve to optimize ribosomal fidelity. This chain is Dual-specificity RNA methyltransferase RlmN, found in Xanthobacter autotrophicus (strain ATCC BAA-1158 / Py2).